The following is a 127-amino-acid chain: Fluoride-specific ion channel FluC (127 aa).

4 helical membrane-spanning segments follow: residues 3-23 (LVFLWAALGGALGSSLRYFVG), 38-58 (LGTFSVNLIGCFVIGLMGHLA), 67-87 (FGIFFVTGVLGGFTTFSSYGL), and 102-122 (ISYVLGTNILGLIGVAIGWFL). Na(+) contacts are provided by Gly-77 and Thr-80.

This sequence belongs to the fluoride channel Fluc/FEX (TC 1.A.43) family.

The protein localises to the cell inner membrane. The enzyme catalyses fluoride(in) = fluoride(out). Its activity is regulated as follows. Na(+) is not transported, but it plays an essential structural role and its presence is essential for fluoride channel function. Fluoride-specific ion channel. Important for reducing fluoride concentration in the cell, thus reducing its toxicity. The chain is Fluoride-specific ion channel FluC from Helicobacter acinonychis (strain Sheeba).